Here is a 472-residue protein sequence, read N- to C-terminus: Probable sterol O-acyltransferase 2 (472 aa).

Phosphoserine is present on serine 12. Transmembrane regions (helical) follow at residues 61 to 81, 111 to 131, and 135 to 155; these read FTGF…MSFL, LAMS…ALGY, and YGLG…HCVL. Residue asparagine 161 is glycosylated (N-linked (GlcNAc...) asparagine). Residues 170-190 traverse the membrane as a helical segment; sequence FILHSMVILMKLHSYNVVNGW. N-linked (GlcNAc...) asparagine glycosylation is present at asparagine 233. The next 2 helical transmembrane spans lie at 262-282 and 317-337; these read IHYL…LVII and TVAF…WVIF. Asparagine 342 carries an N-linked (GlcNAc...) asparagine glycan. The FYXDWWN motif signature appears at 355 to 361; sequence FYDDWWN. Histidine 409 is an active-site residue. The helical transmembrane segment at 452 to 472 threads the bilayer; it reads IAFWFSIIIGIALIAALYILF.

Belongs to the membrane-bound acyltransferase family. Sterol o-acyltransferase subfamily.

It is found in the endoplasmic reticulum membrane. Sterol O-acyltransferase that catalyzes the formation of stery esters. This chain is Probable sterol O-acyltransferase 2 (are2), found in Schizosaccharomyces pombe (strain 972 / ATCC 24843) (Fission yeast).